Consider the following 305-residue polypeptide: Ribosomal RNA small subunit methyltransferase H (305 aa).

Residues 46–48, D65, F92, D108, and H115 contribute to the S-adenosyl-L-methionine site; that span reads GGH.

Belongs to the methyltransferase superfamily. RsmH family.

Its subcellular location is the cytoplasm. The enzyme catalyses cytidine(1402) in 16S rRNA + S-adenosyl-L-methionine = N(4)-methylcytidine(1402) in 16S rRNA + S-adenosyl-L-homocysteine + H(+). Specifically methylates the N4 position of cytidine in position 1402 (C1402) of 16S rRNA. In Trichormus variabilis (strain ATCC 29413 / PCC 7937) (Anabaena variabilis), this protein is Ribosomal RNA small subunit methyltransferase H.